Consider the following 427-residue polypeptide: Trigger factor (427 aa).

Residues G163–P248 enclose the PPIase FKBP-type domain.

This sequence belongs to the FKBP-type PPIase family. Tig subfamily.

It is found in the cytoplasm. The catalysed reaction is [protein]-peptidylproline (omega=180) = [protein]-peptidylproline (omega=0). In terms of biological role, involved in protein export. Acts as a chaperone by maintaining the newly synthesized protein in an open conformation. Functions as a peptidyl-prolyl cis-trans isomerase. In Streptococcus pneumoniae serotype 2 (strain D39 / NCTC 7466), this protein is Trigger factor.